The following is a 393-amino-acid chain: Chalcone synthase (393 aa).

The active site involves Cys164.

This sequence belongs to the thiolase-like superfamily. Chalcone/stilbene synthases family.

It carries out the reaction (E)-4-coumaroyl-CoA + 3 malonyl-CoA + 3 H(+) = 2',4,4',6'-tetrahydroxychalcone + 3 CO2 + 4 CoA. It participates in secondary metabolite biosynthesis; flavonoid biosynthesis. The primary product of this enzyme is 4,2',4',6'-tetrahydroxychalcone (also termed naringenin-chalcone or chalcone) which can under specific conditions spontaneously isomerize into naringenin. The sequence is that of Chalcone synthase (CHS) from Vitis vinifera (Grape).